Consider the following 293-residue polypeptide: Mitochondrial inner membrane protease atp23 (293 aa).

Residues 1–51 (MSPAPTTSAGPASSGIPPSSLPTSTVTEDDTKPSSSSSKANDLLPRYLTND) are disordered. Residues 8-22 (SAGPASSGIPPSSLP) are compositionally biased toward low complexity. Residue His190 coordinates a divalent metal cation. Glu191 is a catalytic residue. His194 contributes to the a divalent metal cation binding site.

The protein belongs to the peptidase M76 family.

Its subcellular location is the mitochondrion inner membrane. Functionally, has a dual role in the assembly of mitochondrial ATPase. Acts as a protease that removes N-terminal residues of mitochondrial ATPase CF(0) subunit 6 at the intermembrane space side. Also involved in the correct assembly of the membrane-embedded ATPase CF(0) particle, probably mediating association of subunit 6 with the subunit 9 ring. This is Mitochondrial inner membrane protease atp23 (atp23) from Neurospora crassa (strain ATCC 24698 / 74-OR23-1A / CBS 708.71 / DSM 1257 / FGSC 987).